Reading from the N-terminus, the 727-residue chain is 1,4-alpha-glucan branching enzyme GlgB (727 aa).

Asp-405 acts as the Nucleophile in catalysis. Glu-458 (proton donor) is an active-site residue.

The protein belongs to the glycosyl hydrolase 13 family. GlgB subfamily. Monomer.

The enzyme catalyses Transfers a segment of a (1-&gt;4)-alpha-D-glucan chain to a primary hydroxy group in a similar glucan chain.. Its pathway is glycan biosynthesis; glycogen biosynthesis. Catalyzes the formation of the alpha-1,6-glucosidic linkages in glycogen by scission of a 1,4-alpha-linked oligosaccharide from growing alpha-1,4-glucan chains and the subsequent attachment of the oligosaccharide to the alpha-1,6 position. The protein is 1,4-alpha-glucan branching enzyme GlgB of Yersinia pestis bv. Antiqua (strain Antiqua).